Reading from the N-terminus, the 265-residue chain is Undecaprenyl-diphosphatase (265 aa).

Transmembrane regions (helical) follow at residues 38-58 (SDMFNIVIQAGAILAVTIIYW), 80-100 (LIVAFLITAILGLVVKKLGFE), 107-127 (PIAWALIIGGIWMIFAEWAAA), 135-155 (ITWLVAILVGIAQIVAGVFPG), 178-198 (TEFAFLVGIPTMYAASAYELL), 216-236 (IAFVVSTVVAFIAVKWLLAYI), and 244-264 (FAIYRIILGVLLLGMAATGLI).

It belongs to the UppP family.

It is found in the cell inner membrane. It catalyses the reaction di-trans,octa-cis-undecaprenyl diphosphate + H2O = di-trans,octa-cis-undecaprenyl phosphate + phosphate + H(+). Catalyzes the dephosphorylation of undecaprenyl diphosphate (UPP). Confers resistance to bacitracin. In Rhizobium johnstonii (strain DSM 114642 / LMG 32736 / 3841) (Rhizobium leguminosarum bv. viciae), this protein is Undecaprenyl-diphosphatase.